We begin with the raw amino-acid sequence, 337 residues long: MNIEATLKNYDLSKLNVVTIASHSSLQILRGAKRHGLGTVAVAKPGSGWFYRRFNFIDNVIEIDLGSMEQLAGDLVKNNAILIPHGSYVEYVGWRRALSMPIPTFGNRYIIEWEADQRKKMRLLEYAGIPIPRSFNDPTQVDRPVIVKLSGAKGGRGYFIAKDAGELAGKLSSINTDDYIIQEYVIGVPAYYHYFDSKVYDRVELFGMDLRYESNVDGRLFNLAEPTFVVTGNIPLVLRESLLPTVQKYGEDFSRAVAELVPPGMIGPYSLESIIKDDLSIVVFEFSGRIVAGTNVYMGVGSPYSVLYFNEPMDMGERIAHEIVNAVKRGKLINVLT.

2 residues coordinate 5-amino-1-(5-phospho-beta-D-ribosyl)imidazole-4-carboxamide: His23 and Ser87. The 208-residue stretch at 121–328 (MRLLEYAGIP…IAHEIVNAVK (208 aa)) folds into the ATP-grasp domain. ATP-binding positions include 144-191 (PVIV…VPAY) and Glu213. 5-amino-1-(5-phospho-beta-D-ribosyl)imidazole-4-carboxamide is bound at residue Asn233. Residues Glu272 and Glu285 each coordinate Mg(2+).

It belongs to the phosphohexose mutase family. Requires Mg(2+) as cofactor. It depends on Mn(2+) as a cofactor.

It catalyses the reaction 5-amino-1-(5-phospho-beta-D-ribosyl)imidazole-4-carboxamide + formate + ATP = 5-formamido-1-(5-phospho-D-ribosyl)imidazole-4-carboxamide + ADP + phosphate. Its pathway is purine metabolism; IMP biosynthesis via de novo pathway; 5-formamido-1-(5-phospho-D-ribosyl)imidazole-4-carboxamide from 5-amino-1-(5-phospho-D-ribosyl)imidazole-4-carboxamide (formate route): step 1/1. Catalyzes the ATP- and formate-dependent formylation of 5-aminoimidazole-4-carboxamide-1-beta-d-ribofuranosyl 5'-monophosphate (AICAR) to 5-formaminoimidazole-4-carboxamide-1-beta-d-ribofuranosyl 5'-monophosphate (FAICAR) in the absence of folates. The protein is 5-formaminoimidazole-4-carboxamide-1-(beta)-D-ribofuranosyl 5'-monophosphate synthetase of Caldivirga maquilingensis (strain ATCC 700844 / DSM 13496 / JCM 10307 / IC-167).